Here is a 498-residue protein sequence, read N- to C-terminus: ATP synthase subunit beta, chloroplastic (498 aa).

172–179 is a binding site for ATP; it reads GGAGVGKT.

The protein belongs to the ATPase alpha/beta chains family. As to quaternary structure, F-type ATPases have 2 components, CF(1) - the catalytic core - and CF(0) - the membrane proton channel. CF(1) has five subunits: alpha(3), beta(3), gamma(1), delta(1), epsilon(1). CF(0) has four main subunits: a(1), b(1), b'(1) and c(9-12).

It is found in the plastid. The protein localises to the chloroplast thylakoid membrane. The enzyme catalyses ATP + H2O + 4 H(+)(in) = ADP + phosphate + 5 H(+)(out). Its function is as follows. Produces ATP from ADP in the presence of a proton gradient across the membrane. The catalytic sites are hosted primarily by the beta subunits. This chain is ATP synthase subunit beta, chloroplastic, found in Zea mays (Maize).